The following is a 262-amino-acid chain: Tethering factor for nuclear proteasome cut8 (262 aa).

It belongs to the cut8/STS1 family. Binds the proteasome. Post-translationally, the N-terminal part (residues 1 to 72) is polyubiquitinated by rhp6, which is required for the interaction with the proteasome.

Its subcellular location is the nucleus envelope. In terms of biological role, together with nucleoporin alm1, tethers the proteasome to the nuclear envelope. Involved in ubiquitin-mediated protein degradation and facilitates the degradation of nuclear proteins like mitotic cyclin and cut2. Required for normal progression of anaphase. In Schizosaccharomyces pombe (strain 972 / ATCC 24843) (Fission yeast), this protein is Tethering factor for nuclear proteasome cut8.